The sequence spans 61 residues: Large ribosomal subunit protein uL30 (61 aa).

The protein belongs to the universal ribosomal protein uL30 family. Part of the 50S ribosomal subunit.

This Saccharophagus degradans (strain 2-40 / ATCC 43961 / DSM 17024) protein is Large ribosomal subunit protein uL30.